A 481-amino-acid chain; its full sequence is Mechanosensory protein 2 (481 aa).

The segment covering Met-1 to Lys-22 has biased composition (low complexity). 2 disordered regions span residues Met-1–Arg-67 and Ser-80–Lys-104. Positions Leu-27 to Gln-38 are enriched in polar residues. Over residues Asp-86–Lys-104 the composition is skewed to basic and acidic residues. The chain crosses the membrane as a helical span at residues Gly-115–Ile-135. The span at Glu-403–Ser-421 shows a compositional bias: gly residues. A disordered region spans residues Glu-403–Arg-481. The segment covering Ser-433 to Arg-447 has biased composition (low complexity). A compositionally biased stretch (polar residues) spans Ala-463–Gln-473.

Belongs to the band 7/mec-2 family. As to quaternary structure, component of a non-voltage-gated amiloride-sensitive cation channel complex (also called the degenerin channel complex) composed of at least the mec-2, mec-4, mec-6 and mec-10 subunits; the complex mediates mechanotransduction in touch cells. Interacts with mec-6 and mec-4.

It localises to the membrane. In terms of biological role, subunit of an amiloride-sensitive cation channel (degenerin channel complex) permeable for sodium, potassium, lithium and N-methylglucamine, and required for mechanosensory transduction (touch sensitivity). Positively regulates the activity of the putative mechanosensory transduction channel. May link the mechanosensory channel and the microtubule cytoskeleton of the touch receptor neurons. Required for the function of a set of six touch receptor neurons. In Caenorhabditis elegans, this protein is Mechanosensory protein 2.